Reading from the N-terminus, the 329-residue chain is NADH-quinone oxidoreductase subunit H (329 aa).

A run of 9 helical transmembrane segments spans residues 9 to 29 (LIKI…ATYI), 42 to 62 (GPCY…IKLF), 75 to 95 (FIFT…MAPI), 117 to 137 (IGFL…ILAG), 154 to 174 (IQLL…LMVV), 188 to 208 (GGFL…FLIA), 238 to 258 (LKWG…SFVI), 269 to 291 (WGFI…LSMW), and 309 to 329 (WKIM…IILI).

The protein belongs to the complex I subunit 1 family. As to quaternary structure, NDH-1 is composed of 14 different subunits. Subunits NuoA, H, J, K, L, M, N constitute the membrane sector of the complex.

It localises to the cell inner membrane. The enzyme catalyses a quinone + NADH + 5 H(+)(in) = a quinol + NAD(+) + 4 H(+)(out). NDH-1 shuttles electrons from NADH, via FMN and iron-sulfur (Fe-S) centers, to quinones in the respiratory chain. The immediate electron acceptor for the enzyme in this species is believed to be ubiquinone. Couples the redox reaction to proton translocation (for every two electrons transferred, four hydrogen ions are translocated across the cytoplasmic membrane), and thus conserves the redox energy in a proton gradient. This subunit may bind ubiquinone. The chain is NADH-quinone oxidoreductase subunit H from Helicobacter pylori (strain HPAG1).